We begin with the raw amino-acid sequence, 191 residues long: Ferric nitrobindin-like protein (191 aa).

Residues 20 to 26 carry the GXWXGXG motif; it reads GNWAGAG.

The protein belongs to the nitrobindin family.

The sequence is that of Ferric nitrobindin-like protein from Streptomyces avermitilis (strain ATCC 31267 / DSM 46492 / JCM 5070 / NBRC 14893 / NCIMB 12804 / NRRL 8165 / MA-4680).